A 317-amino-acid polypeptide reads, in one-letter code: Beta-ketoacyl-[acyl-carrier-protein] synthase III (317 aa).

Catalysis depends on residues cysteine 112 and histidine 244. Residues 245–249 are ACP-binding; that stretch reads QANLR. Residue asparagine 274 is part of the active site.

This sequence belongs to the thiolase-like superfamily. FabH family. In terms of assembly, homodimer.

It is found in the cytoplasm. It carries out the reaction malonyl-[ACP] + acetyl-CoA + H(+) = 3-oxobutanoyl-[ACP] + CO2 + CoA. The protein operates within lipid metabolism; fatty acid biosynthesis. Functionally, catalyzes the condensation reaction of fatty acid synthesis by the addition to an acyl acceptor of two carbons from malonyl-ACP. Catalyzes the first condensation reaction which initiates fatty acid synthesis and may therefore play a role in governing the total rate of fatty acid production. Possesses both acetoacetyl-ACP synthase and acetyl transacylase activities. Its substrate specificity determines the biosynthesis of branched-chain and/or straight-chain of fatty acids. This Pectobacterium atrosepticum (strain SCRI 1043 / ATCC BAA-672) (Erwinia carotovora subsp. atroseptica) protein is Beta-ketoacyl-[acyl-carrier-protein] synthase III.